A 445-amino-acid chain; its full sequence is MNEEYDVIVLGTGLTECILSGIMSVNGKKVLHMDRNPYYGGESASITPLEDLYKRFKIPGSPPESMGRGRDWNVDLIPKFLMANGQLVKMLLYTEVTRYLDFKVTEGSFVYKGGKIYKVPSTEAEALASSLMGLFEKRRFRKFLVYVANFDEKDPRTFEGIDPKKTTMRDVYKKFDLGQDVIDFTGHALALYRTDDYLDQPCYETINRIKLYSESLARYGKSPYLYPLYGLGELPQGFARLSAIYGGTYMLNKPIEEIIVQNGKVIGVKSEGEIARCKQLICDPSYVKDRVEKVGQVIRVICILSHPIKNTNDANSCQIIIPQNQVNRKSDIYVCMISFAHNVAAQGKYIAIVSTTVETKEPEKEIRPALELLEPIEQKFVSISDLLVPKDLGTESQIFISRTYDATTHFETTCDDIKNIYKRMTGSEFDFEEMKRKKNDIYGED.

Residue Met-1 is modified to N-acetylmethionine. Position 57 is an N6-succinyllysine (Lys-57). The residue at position 61 (Ser-61) is a Phosphoserine. Lys-112 bears the N6-acetyllysine mark. Ser-130 carries the phosphoserine modification. Position 269 is an N6-acetyllysine (Lys-269). Ser-382 is subject to Phosphoserine.

This sequence belongs to the Rab GDI family. In terms of assembly, interacts with RHOH. Interacts with the GDP-bound inactive forms of RAB3A, RAB3B, RAB3C, RAB5A, RAB5B, RAB5C, RAB8A, RAB8B, RAB10, RAB12, RAB35, and RAB43; binds RAB3D to a lesser extent. Interacts with DZIP1; this interaction negatively regulates the interaction of GDI2 with GDP-bound RAB8A. As to expression, ubiquitous.

The protein localises to the cytoplasm. It is found in the membrane. The protein resides in the golgi apparatus. Its subcellular location is the trans-Golgi network. Its function is as follows. GDP-dissociation inhibitor preventing the GDP to GTP exchange of most Rab proteins. By keeping these small GTPases in their inactive GDP-bound form regulates intracellular membrane trafficking. Negatively regulates protein transport to the cilium and ciliogenesis through the inhibition of RAB8A. This is Rab GDP dissociation inhibitor beta (GDI2) from Homo sapiens (Human).